The primary structure comprises 107 residues: UPF0060 membrane protein M446_5886 (107 aa).

Transmembrane regions (helical) follow at residues 4 to 24, 31 to 51, 59 to 79, and 85 to 105; these read LLAY…IWAW, PLWL…LTRV, AYAA…WAAE, and RWDL…LLGP.

The protein belongs to the UPF0060 family.

It localises to the cell inner membrane. This is UPF0060 membrane protein M446_5886 from Methylobacterium sp. (strain 4-46).